A 304-amino-acid polypeptide reads, in one-letter code: Quinolinate synthase (304 aa).

Residues His24 and Ser41 each coordinate iminosuccinate. Cys86 lines the [4Fe-4S] cluster pocket. Iminosuccinate is bound by residues Tyr112–Asn114 and Ser129. Residue Cys171 coordinates [4Fe-4S] cluster. Iminosuccinate-binding positions include His197 to Glu199 and Thr214. A [4Fe-4S] cluster-binding site is contributed by Cys259.

The protein belongs to the quinolinate synthase family. Type 2 subfamily. The cofactor is [4Fe-4S] cluster.

Its subcellular location is the cytoplasm. It carries out the reaction iminosuccinate + dihydroxyacetone phosphate = quinolinate + phosphate + 2 H2O + H(+). Its pathway is cofactor biosynthesis; NAD(+) biosynthesis; quinolinate from iminoaspartate: step 1/1. In terms of biological role, catalyzes the condensation of iminoaspartate with dihydroxyacetone phosphate to form quinolinate. This chain is Quinolinate synthase, found in Geobacter sp. (strain M21).